The following is a 393-amino-acid chain: Bifunctional enzyme IspD/IspF (393 aa).

The tract at residues 1 to 234 is 2-C-methyl-D-erythritol 4-phosphate cytidylyltransferase; that stretch reads MTTSQRTAAI…ARLAASLGDI (234 aa). The 2-C-methyl-D-erythritol 2,4-cyclodiphosphate synthase stretch occupies residues 235 to 393; it reads RTGTGYDVHA…SATIRLPWGA (159 aa). Residues Asp-241 and His-243 each coordinate a divalent metal cation. 4-CDP-2-C-methyl-D-erythritol 2-phosphate contacts are provided by residues 241–243 and 267–268; these read DVH and HS. His-275 contributes to the a divalent metal cation binding site. 4-CDP-2-C-methyl-D-erythritol 2-phosphate-binding positions include 289 to 291, 365 to 368, Phe-372, and Arg-375; these read DIG and TTSE.

It in the N-terminal section; belongs to the IspD/TarI cytidylyltransferase family. IspD subfamily. In the C-terminal section; belongs to the IspF family. Requires a divalent metal cation as cofactor.

It carries out the reaction 2-C-methyl-D-erythritol 4-phosphate + CTP + H(+) = 4-CDP-2-C-methyl-D-erythritol + diphosphate. The catalysed reaction is 4-CDP-2-C-methyl-D-erythritol 2-phosphate = 2-C-methyl-D-erythritol 2,4-cyclic diphosphate + CMP. It participates in isoprenoid biosynthesis; isopentenyl diphosphate biosynthesis via DXP pathway; isopentenyl diphosphate from 1-deoxy-D-xylulose 5-phosphate: step 2/6. Its pathway is isoprenoid biosynthesis; isopentenyl diphosphate biosynthesis via DXP pathway; isopentenyl diphosphate from 1-deoxy-D-xylulose 5-phosphate: step 4/6. Bifunctional enzyme that catalyzes the formation of 4-diphosphocytidyl-2-C-methyl-D-erythritol from CTP and 2-C-methyl-D-erythritol 4-phosphate (MEP) (IspD), and catalyzes the conversion of 4-diphosphocytidyl-2-C-methyl-D-erythritol 2-phosphate (CDP-ME2P) to 2-C-methyl-D-erythritol 2,4-cyclodiphosphate (ME-CPP) with a corresponding release of cytidine 5-monophosphate (CMP) (IspF). The protein is Bifunctional enzyme IspD/IspF of Bradyrhizobium sp. (strain ORS 278).